We begin with the raw amino-acid sequence, 690 residues long: CREB-H transcription factor homolog let-607 (690 aa).

Disordered regions lie at residues 87 to 118 (NDNCYSLSPPDSGSLPISPASTSPSSYHSSGG), 166 to 192 (SAVHQNQQQQQRRLNQAGFPHQNSNGL), and 205 to 253 (PASI…KYPP). Low complexity-rich tracts occupy residues 100–116 (SLPISPASTSPSSYHSS), 170–181 (QNQQQQQRRLNQ), and 213–236 (PSSSFNPQSTSSTPATSSSSSSST). A bZIP domain is found at 284–347 (DLKRIRRKIR…QSVISQLKKL (64 aa)). The basic motif stretch occupies residues 286 to 321 (KRIRRKIRNKRSAQTSRKRKQDYIEQLEDRVSESTK). The stretch at 295–350 (KRSAQTSRKRKQDYIEQLEDRVSESTKENQALKQQIERLSSENQSVISQLKKLQAQ) forms a coiled coil. A leucine-zipper region spans residues 326–333 (LKQQIERL). Over residues 451-464 (HNNSKYPASGNQNH) the composition is skewed to polar residues. Disordered stretches follow at residues 451–495 (HNNS…SMYR) and 509–536 (GARKGSSTSSSSASSVASSTSTSSATSP). Composition is skewed to low complexity over residues 480 to 492 (QPKQSYQQQHQPS) and 514 to 535 (SSTSSSSASSVASSTSTSSATS).

Belongs to the bZIP family.

It localises to the nucleus. Functionally, probable transcription factor, required during migration of the gonadal distal tip cells (DTC). Probably regulates cell adhesion of DTCs via modulation of expression of genes involved in integrin-mediated adhesion, including tln-1, src-1, and integrin pat-2. Modulates expression of genes involved in protein trafficking during embryogenesis, including emo-1, sec-61, calu-1, sec-24.1, enpl-1, sar-1 and tfg-1. The protein is CREB-H transcription factor homolog let-607 of Caenorhabditis elegans.